The sequence spans 398 residues: Arylacetamide deacetylase (398 aa).

The Cytoplasmic segment spans residues 1 to 5 (MGKTI). A helical; Signal-anchor for type II membrane protein membrane pass occupies residues 6–26 (SLLISVVLVAYYLYIPLPDAI). Over 27–398 (EEPWKVVWET…QYLSWLIKNL (372 aa)) the chain is Lumenal. Residues 110–112 (HGG) carry the Involved in the stabilization of the negatively charged intermediate by the formation of the oxyanion hole motif. Residues Cys115 and Cys339 are joined by a disulfide bond. Residue Ser188 is part of the active site. N-linked (GlcNAc...) asparagine glycosylation is present at Asn281. Catalysis depends on residues Asp342 and His372.

The protein belongs to the 'GDXG' lipolytic enzyme family. In terms of processing, N-glycosylated. As to expression, highest levels in liver with lower levels in jejunum and kidney.

The protein localises to the endoplasmic reticulum membrane. It is found in the microsome membrane. It catalyses the reaction a triacylglycerol + H2O = a diacylglycerol + a fatty acid + H(+). In terms of biological role, displays cellular triglyceride lipase activity in liver, increases the levels of intracellular fatty acids derived from the hydrolysis of newly formed triglyceride stores and plays a role in very low-density lipoprotein assembly. Displays serine esterase activity in liver. Deacetylates a variety of arylacetamide substrates, including xenobiotic compounds and procarcinogens, converting them to the primary arylamide compounds and increasing their toxicity. The polypeptide is Arylacetamide deacetylase (Aadac) (Mus musculus (Mouse)).